Here is a 153-residue protein sequence, read N- to C-terminus: SsrA-binding protein (153 aa).

The protein belongs to the SmpB family.

It is found in the cytoplasm. Functionally, required for rescue of stalled ribosomes mediated by trans-translation. Binds to transfer-messenger RNA (tmRNA), required for stable association of tmRNA with ribosomes. tmRNA and SmpB together mimic tRNA shape, replacing the anticodon stem-loop with SmpB. tmRNA is encoded by the ssrA gene; the 2 termini fold to resemble tRNA(Ala) and it encodes a 'tag peptide', a short internal open reading frame. During trans-translation Ala-aminoacylated tmRNA acts like a tRNA, entering the A-site of stalled ribosomes, displacing the stalled mRNA. The ribosome then switches to translate the ORF on the tmRNA; the nascent peptide is terminated with the 'tag peptide' encoded by the tmRNA and targeted for degradation. The ribosome is freed to recommence translation, which seems to be the essential function of trans-translation. This chain is SsrA-binding protein, found in Sulfurovum sp. (strain NBC37-1).